The sequence spans 73 residues: Small ribosomal subunit protein bS18 (73 aa).

Belongs to the bacterial ribosomal protein bS18 family. Part of the 30S ribosomal subunit. Forms a tight heterodimer with protein bS6.

In terms of biological role, binds as a heterodimer with protein bS6 to the central domain of the 16S rRNA, where it helps stabilize the platform of the 30S subunit. The sequence is that of Small ribosomal subunit protein bS18 from Prochlorococcus marinus (strain SARG / CCMP1375 / SS120).